Reading from the N-terminus, the 92-residue chain is Small ribosomal subunit protein uS19 (92 aa).

Belongs to the universal ribosomal protein uS19 family.

Its function is as follows. Protein S19 forms a complex with S13 that binds strongly to the 16S ribosomal RNA. The protein is Small ribosomal subunit protein uS19 of Bacillus cereus (strain B4264).